The sequence spans 467 residues: Syntaxin-5 (467 aa).

2 disordered regions span residues Met-1–Val-53 and Gly-58–Thr-77. The Cytoplasmic segment spans residues Met-1–Arg-445. A compositionally biased stretch (low complexity) spans Thr-10–Thr-22. Positions Gly-29–Val-45 are enriched in gly residues. The span at Asn-68–Thr-77 shows a compositional bias: polar residues. Residues Ile-245–His-269 adopt a coiled-coil conformation. Positions Gln-310–Ala-335 are disordered. Positions Asp-375–Tyr-437 constitute a t-SNARE coiled-coil homology domain. The helical; Anchor for type IV membrane protein transmembrane segment at Trp-446–Met-466 threads the bilayer. Residue Ser-467 is a topological domain, vesicular.

This sequence belongs to the syntaxin family. Homodimer.

Its subcellular location is the golgi apparatus. It localises to the cis-Golgi network membrane. Functionally, mediates endoplasmic reticulum to Golgi transport. This Drosophila melanogaster (Fruit fly) protein is Syntaxin-5.